The sequence spans 134 residues: NADH-quinone oxidoreductase subunit A (134 aa).

The next 3 helical transmembrane spans lie at 12–32, 64–84, and 93–113; these read FAIY…LAAL, FYLV…LFAW, and WVGF…LLYL.

The protein belongs to the complex I subunit 3 family. As to quaternary structure, NDH-1 is composed of 14 different subunits. Subunits NuoA, H, J, K, L, M, N constitute the membrane sector of the complex.

Its subcellular location is the cell inner membrane. The enzyme catalyses a quinone + NADH + 5 H(+)(in) = a quinol + NAD(+) + 4 H(+)(out). NDH-1 shuttles electrons from NADH, via FMN and iron-sulfur (Fe-S) centers, to quinones in the respiratory chain. The immediate electron acceptor for the enzyme in this species is believed to be ubiquinone. Couples the redox reaction to proton translocation (for every two electrons transferred, four hydrogen ions are translocated across the cytoplasmic membrane), and thus conserves the redox energy in a proton gradient. This chain is NADH-quinone oxidoreductase subunit A, found in Aeromonas salmonicida (strain A449).